A 365-amino-acid polypeptide reads, in one-letter code: Peptide chain release factor 2 (365 aa).

Gln249 is modified (N5-methylglutamine).

The protein belongs to the prokaryotic/mitochondrial release factor family. In terms of processing, methylated by PrmC. Methylation increases the termination efficiency of RF2.

It localises to the cytoplasm. In terms of biological role, peptide chain release factor 2 directs the termination of translation in response to the peptide chain termination codons UGA and UAA. The chain is Peptide chain release factor 2 from Acholeplasma laidlawii (strain PG-8A).